A 281-amino-acid chain; its full sequence is Acetyl-coenzyme A carboxylase carboxyl transferase subunit beta (281 aa).

Positions 23–281 (LWSKCEDCGA…KTLAMMRVEG (259 aa)) constitute a CoA carboxyltransferase N-terminal domain. The Zn(2+) site is built by Cys27, Cys30, Cys46, and Cys49. Residues 27–49 (CEDCGAMLHRRQLEENLNTCNEC) form a C4-type zinc finger.

The protein belongs to the AccD/PCCB family. As to quaternary structure, acetyl-CoA carboxylase is a heterohexamer composed of biotin carboxyl carrier protein (AccB), biotin carboxylase (AccC) and two subunits each of ACCase subunit alpha (AccA) and ACCase subunit beta (AccD). Zn(2+) serves as cofactor.

It is found in the cytoplasm. The enzyme catalyses N(6)-carboxybiotinyl-L-lysyl-[protein] + acetyl-CoA = N(6)-biotinyl-L-lysyl-[protein] + malonyl-CoA. It participates in lipid metabolism; malonyl-CoA biosynthesis; malonyl-CoA from acetyl-CoA: step 1/1. In terms of biological role, component of the acetyl coenzyme A carboxylase (ACC) complex. Biotin carboxylase (BC) catalyzes the carboxylation of biotin on its carrier protein (BCCP) and then the CO(2) group is transferred by the transcarboxylase to acetyl-CoA to form malonyl-CoA. This chain is Acetyl-coenzyme A carboxylase carboxyl transferase subunit beta, found in Chlorobium luteolum (strain DSM 273 / BCRC 81028 / 2530) (Pelodictyon luteolum).